An 86-amino-acid polypeptide reads, in one-letter code: Putative pro-MCH-like protein 2 (86 aa).

Residues Gly31 to Glu49 form an NGE-like region. Residues Gly40–Ala60 form a disordered region. An NEI-like region spans residues Glu52–Ile64. The segment at Asp68–Val86 is melanin-concentrating hormone-like.

It belongs to the melanin-concentrating hormone family. As to expression, expressed in testis but not in brain.

This chain is Putative pro-MCH-like protein 2 (PMCHL2), found in Homo sapiens (Human).